An 882-amino-acid polypeptide reads, in one-letter code: Isoamylase 2, chloroplastic (882 aa).

A chloroplast-targeting transit peptide spans 1 to 70; the sequence is MAAWSPSVGI…LQSYQFSKIC (70 aa).

Belongs to the glycosyl hydrolase 13 family. Associates with ISA1 to form the heteromultimeric complex Iso1 required for amylopectin synthesis.

The protein localises to the plastid. Its subcellular location is the chloroplast. It functions in the pathway glycan biosynthesis; starch biosynthesis. Its function is as follows. Involved in the trimming of pre-amylopectin chains. Accelerates the crystallization of nascent amylopectin molecules during starch synthesis. ISA1 and ISA2 work exclusively together as a multimeric holoenzyme. ISA1-ISA2 removes preferentially branches that are very close to other branches. The sequence is that of Isoamylase 2, chloroplastic (ISA2) from Arabidopsis thaliana (Mouse-ear cress).